Here is a 161-residue protein sequence, read N- to C-terminus: Ribosome maturation factor RimP (161 aa).

It belongs to the RimP family.

It localises to the cytoplasm. Its function is as follows. Required for maturation of 30S ribosomal subunits. The polypeptide is Ribosome maturation factor RimP (Rickettsia felis (strain ATCC VR-1525 / URRWXCal2) (Rickettsia azadi)).